We begin with the raw amino-acid sequence, 309 residues long: MKIFHTVEEVVQWRTQELRETRFRETIGFVPTMGCLHSGHASLISQSVKENTYTVVSIFVNPSQFAPTEDLDNYPRTLPDDIKLLESLKVDVLFAPNAHVMYPQGIPLDIEEQKGPFVSVLGLSEKLEGKTRPNFFRGVATVVTKLFNIVMADVAYFGQKDIQQFIVLQCMVDELFVNTRLQMMPIVRNNNGLALSSRNKYLCPESLKISENLYRGLKAAENAIRRLAPGGRLSRSEIIDTVTQIWAPYVDSHDFKIDYVSLADFKTLDELSDVENTSEQQPIVISCAVYVTDREKPDTVVRLIDNIVI.

This sequence belongs to the pantothenate synthetase family.

The protein localises to the cytoplasm. It localises to the nucleus. It carries out the reaction (R)-pantoate + beta-alanine + ATP = (R)-pantothenate + AMP + diphosphate + H(+). The protein operates within cofactor biosynthesis; (R)-pantothenate biosynthesis; (R)-pantothenate from (R)-pantoate and beta-alanine: step 1/1. In terms of biological role, required for pantothenic acid biosynthesis. The polypeptide is Pantoate--beta-alanine ligase (PAN6) (Saccharomyces cerevisiae (strain ATCC 204508 / S288c) (Baker's yeast)).